Reading from the N-terminus, the 386-residue chain is Aspergillopepsin-1 (386 aa).

Residues Met1–Ala20 form the signal peptide. The propeptide at Met21–Met69 is activation peptide. The region spanning Tyr85 to Ala383 is the Peptidase A1 domain. Residue Asp101 is part of the active site. The N-linked (GlcNAc...) asparagine glycan is linked to Asn130. Asp275 is an active-site residue. A disulfide bridge links Cys311 with Cys346.

This sequence belongs to the peptidase A1 family. Monomer.

It is found in the secreted. The catalysed reaction is Hydrolysis of proteins with broad specificity. Generally favors hydrophobic residues in P1 and P1', but also accepts Lys in P1, which leads to activation of trypsinogen. Does not clot milk.. Secreted aspartic endopeptidase that allows assimilation of proteinaceous substrates. The scissile peptide bond is attacked by a nucleophilic water molecule activated by two aspartic residues in the active site. Shows a broad primary substrate specificity. Favors hydrophobic residues at the P1 and P1' positions, but also accepts a lysine residue in the P1 position, leading to the activation of trypsinogen and chymotrypsinogen A. This is Aspergillopepsin-1 from Emericella nidulans (strain FGSC A4 / ATCC 38163 / CBS 112.46 / NRRL 194 / M139) (Aspergillus nidulans).